Consider the following 328-residue polypeptide: tRNA(Ile)-lysidine synthase (328 aa).

ATP is bound at residue 35 to 40 (SGGADS).

It belongs to the tRNA(Ile)-lysidine synthase family.

The protein localises to the cytoplasm. The enzyme catalyses cytidine(34) in tRNA(Ile2) + L-lysine + ATP = lysidine(34) in tRNA(Ile2) + AMP + diphosphate + H(+). Functionally, ligates lysine onto the cytidine present at position 34 of the AUA codon-specific tRNA(Ile) that contains the anticodon CAU, in an ATP-dependent manner. Cytidine is converted to lysidine, thus changing the amino acid specificity of the tRNA from methionine to isoleucine. The sequence is that of tRNA(Ile)-lysidine synthase from Polaromonas naphthalenivorans (strain CJ2).